The sequence spans 690 residues: Protein SPT2 homolog (690 aa).

Residues Met1–Gln579 are important for interaction with DNA. A coiled-coil region spans residues Glu40–Ala82. 2 disordered regions span residues Pro105–Pro167 and Glu186–Ile619. Over residues Glu186–Lys228 the composition is skewed to basic and acidic residues. Low complexity predominate over residues Ser229–Lys243. 2 stretches are compositionally biased toward basic and acidic residues: residues Glu244–Ala259 and Thr271–Ser285. Polar residues predominate over residues His369–Ser380. The segment covering Gly383 to Ala396 has biased composition (gly residues). Over residues Gly397–Pro442 the composition is skewed to low complexity. Gly residues-rich tracts occupy residues Gly443–Gly457, Gly465–Arg477, and Leu489–Arg521. A compositionally biased stretch (polar residues) spans Val545–Gly565. The segment at Gly580 to Arg690 is important for interaction with histones. The segment covering Asp593–Glu617 has biased composition (acidic residues). Residues Arg650–Arg690 are a coiled coil.

This sequence belongs to the SPT2 family. Interacts with POLR1A. Interacts with histones. Interacts with a heterotetrameric complex formed by histone H3 and H4, especially when the histone tetramer is not bound to DNA.

It localises to the nucleus. Its subcellular location is the nucleolus. Its function is as follows. Histone chaperone that stabilizes pre-existing histone tetramers and regulates replication-independent histone exchange on chromatin. Required for normal chromatin refolding in the coding region of transcribed genes, and for the suppression of spurious transcription. Binds DNA and histones and promotes nucleosome assembly (in vitro). Modulates RNA polymerase 1-mediated transcription. Required for optimal growth in the presence of the DNA damaging agents actinomycin D or mitomycin C (in vitro). Facilitates formation of tetrameric histone complexes containing histone H3 and H4. Modulates RNA polymerase 1-mediated transcription. Binds DNA, with a preference for branched DNA species, such as Y-form DNA and Holliday junction DNA. This Gallus gallus (Chicken) protein is Protein SPT2 homolog (SPTY2D1).